The primary structure comprises 308 residues: Putative integrase/recombinase y4qK (308 aa).

The region spanning 15 to 97 is the Core-binding (CB) domain; it reads LVMTPLRQRM…ALRFFFSVTL (83 aa). The Tyr recombinase domain maps to 115–288; that stretch reads KLPIILSPDE…ATNKVCATSS (174 aa). Residues Arg150, Lys175, His240, Arg243, and His266 contribute to the active site. Residue Tyr275 is the O-(3'-phospho-DNA)-tyrosine intermediate of the active site.

This sequence belongs to the 'phage' integrase family.

In terms of biological role, may function as an integrase. The sequence is that of Putative integrase/recombinase y4qK from Sinorhizobium fredii (strain NBRC 101917 / NGR234).